The chain runs to 343 residues: Dihydroorotase (343 aa).

Positions 14 and 16 each coordinate Zn(2+). Substrate is bound by residues 16 to 18 (HVR) and Asn42. Zn(2+) is bound by residues Lys98, His135, and His173. An N6-carboxylysine modification is found at Lys98. Residue His135 coordinates substrate. Leu219 lines the substrate pocket. Asp247 lines the Zn(2+) pocket. Asp247 is a catalytic residue. Residues His251 and Ala263 each coordinate substrate.

The protein belongs to the metallo-dependent hydrolases superfamily. DHOase family. Class II DHOase subfamily. Homodimer. Requires Zn(2+) as cofactor.

The enzyme catalyses (S)-dihydroorotate + H2O = N-carbamoyl-L-aspartate + H(+). Its pathway is pyrimidine metabolism; UMP biosynthesis via de novo pathway; (S)-dihydroorotate from bicarbonate: step 3/3. In terms of biological role, catalyzes the reversible cyclization of carbamoyl aspartate to dihydroorotate. The protein is Dihydroorotase of Marinobacter nauticus (strain ATCC 700491 / DSM 11845 / VT8) (Marinobacter aquaeolei).